The primary structure comprises 462 residues: HEPACAM family member 2 (462 aa).

The signal sequence occupies residues 1–31 (MGQDAFMEPFGDTLGVFQCKIYLLLFGACSG). Asparagine 85, asparagine 129, and asparagine 165 each carry an N-linked (GlcNAc...) asparagine glycan. Ig-like C2-type domains lie at 149-233 (PVVQ…SDII) and 235-331 (PIIY…THFT). 2 disulfide bridges follow: cysteine 170–cysteine 219 and cysteine 270–cysteine 315. N-linked (GlcNAc...) asparagine glycosylation occurs at asparagine 320. A helical membrane pass occupies residues 352–372 (LASITGISLFLIISMCLLFLW). At 373-462 (KKYQPYKVIK…IPAQQQDHPE (90 aa)) the chain is on the cytoplasmic side.

Poly-ADP-ribosylated (PARsylated) by tankyrase TNKS during late G2 and prophase, leading to translocation to mitotic centrosomes. Post-translationally, N-glycosylated. As to expression, widely expressed.

It is found in the golgi apparatus membrane. The protein localises to the cytoplasm. It localises to the cytoskeleton. Its subcellular location is the spindle. The protein resides in the microtubule organizing center. It is found in the centrosome. The protein localises to the midbody. Its function is as follows. Required during prometaphase for centrosome maturation. Following poly-ADP-ribosylation (PARsylation) by TNKS, translocates from the Golgi apparatus to mitotic centrosomes and plays a key role in the formation of robust microtubules for prompt movement of chromosomes: anchors AKAP9/CG-NAP, a scaffold protein of the gamma-tubulin ring complex and promotes centrosome maturation. In Homo sapiens (Human), this protein is HEPACAM family member 2 (HEPACAM2).